The sequence spans 236 residues: EP300-interacting inhibitor of differentiation 2 (236 aa).

The segment covering 1-15 (MSQLPAVSSAPQTGA) has biased composition (polar residues). The interval 1-102 (MSQLPAVSSA…REGPAAAAAS (102 aa)) is disordered. Composition is skewed to low complexity over residues 32 to 68 (RALP…GRVA) and 75 to 102 (AAAA…AAAS). Omega-N-methylarginine occurs at positions 63 and 79. Positions 170 to 190 (RIQELEERRRRFVEACRAREA) form a coiled coil.

In terms of assembly, heterodimer with EID2B. Interacts with the C-terminus of EP300. Interacts with HDAC1 and HDAC2. Interacts with SMAD2, SMAD4 and with the MH2 domain of SMAD3. In terms of tissue distribution, expressed in heart, brain, kidney and pancreas. Not detected in placenta.

It is found in the nucleus. Functionally, interacts with EP300 and acts as a repressor of MYOD-dependent transcription and muscle differentiation. Inhibits EP300 histone acetyltransferase activity. Acts as a repressor of TGFB/SMAD transcriptional responses. May act as a repressor of the TGFB/SMAD3-dependent signaling by selectively blocking formation of TGFB-induced SMAD3-SMAD4 complex. This Mus musculus (Mouse) protein is EP300-interacting inhibitor of differentiation 2.